Reading from the N-terminus, the 329-residue chain is Phenylalanine--tRNA ligase alpha subunit (329 aa).

Mg(2+) is bound at residue Glu254.

This sequence belongs to the class-II aminoacyl-tRNA synthetase family. Phe-tRNA synthetase alpha subunit type 1 subfamily. In terms of assembly, tetramer of two alpha and two beta subunits. Mg(2+) serves as cofactor.

It is found in the cytoplasm. It carries out the reaction tRNA(Phe) + L-phenylalanine + ATP = L-phenylalanyl-tRNA(Phe) + AMP + diphosphate + H(+). This is Phenylalanine--tRNA ligase alpha subunit from Histophilus somni (strain 129Pt) (Haemophilus somnus).